The following is a 100-amino-acid chain: Urease subunit gamma (100 aa).

The protein belongs to the urease gamma subunit family. As to quaternary structure, heterotrimer of UreA (gamma), UreB (beta) and UreC (alpha) subunits. Three heterotrimers associate to form the active enzyme.

It is found in the cytoplasm. It catalyses the reaction urea + 2 H2O + H(+) = hydrogencarbonate + 2 NH4(+). It participates in nitrogen metabolism; urea degradation; CO(2) and NH(3) from urea (urease route): step 1/1. This is Urease subunit gamma from Rhizobium meliloti (strain 1021) (Ensifer meliloti).